Consider the following 551-residue polypeptide: Calnexin homolog (551 aa).

An N-terminal signal peptide occupies residues 1 to 26 (MVDRKEIPLAMGLLAVLLFFVASSSS). Over 27–480 (FHLVRASDEV…EKGEKQPNLT (454 aa)) the chain is Lumenal. Residues Ser44 and Asp75 each contribute to the Ca(2+) site. Cys118 and Cys153 are oxidised to a cystine. An alpha-D-glucoside-binding residues include Tyr122 and Lys124. Asn140 is a glycosylation site (N-linked (GlcNAc...) asparagine). Residues Tyr144 and Asp151 each coordinate an alpha-D-glucoside. The interval 226–330 (ALIPSKTIPD…CGEWKRPTKS (105 aa)) is disordered. The tract at residues 233–364 (IPDPDDKKPE…QEIPNPEYFE (132 aa)) is p domain (Extended arm). Basic and acidic residues-rich tracts occupy residues 234 to 269 (PDPD…PREI) and 276 to 295 (KPEP…AKPE). 5 tandem repeats follow at residues 235-246 (DPDDKKPEDWDE), 252-263 (DPEAVKPEDWDE), 271-282 (DEEAEKPEPWLD), 289-299 (DPEAKPEDWDD), and 303-313 (GEWEAPKIENP). 2 4 X approximate repeats regions span residues 235–299 (DPDD…DWDD) and 303–360 (GEWE…IPNP). The span at 296-305 (DWDDEEDGEW) shows a compositional bias: acidic residues. Cys315 and Cys321 are oxidised to a cystine. 3 consecutive repeat copies span residues 322 to 332 (GEWKRPTKSNP), 336 to 346 (GKWSAPYIDNP), and 350 to 360 (GIWKPQEIPNP). Glu379 contacts an alpha-D-glucoside. Asp390 contributes to the Ca(2+) binding site. Asn478 carries an N-linked (GlcNAc...) asparagine glycan. A helical membrane pass occupies residues 481–501 (IGIIVSVVIVFVSIFFRLIFG). Topologically, residues 502–551 (GKKPANVEANVEKKKTNTETTSKQDGGEKEDNKEKEETANPPRRRPKRDN) are cytoplasmic. Residues 510–551 (ANVEKKKTNTETTSKQDGGEKEDNKEKEETANPPRRRPKRDN) are disordered. Over residues 526–539 (DGGEKEDNKEKEET) the composition is skewed to basic and acidic residues.

It belongs to the calreticulin family. In terms of tissue distribution, in vegetative and flowering tissues.

It localises to the endoplasmic reticulum membrane. Functionally, calcium-binding protein that interacts with newly synthesized monoglucosylated glycoproteins in the endoplasmic reticulum. It may act in assisting protein assembly and/or in the retention within the ER of unassembled protein subunits. It seems to play a major role in the quality control apparatus of the ER by the retention of incorrectly folded proteins. This is Calnexin homolog from Pisum sativum (Garden pea).